Consider the following 45-residue polypeptide: Large ribosomal subunit protein bL34 (45 aa).

The segment at 1 to 27 (MTKRTLGGTSRKRKRVSGFRVRMRSHT) is disordered. Positions 10–27 (SRKRKRVSGFRVRMRSHT) are enriched in basic residues.

It belongs to the bacterial ribosomal protein bL34 family.

The chain is Large ribosomal subunit protein bL34 from Synechococcus sp. (strain CC9902).